The sequence spans 141 residues: Large-conductance mechanosensitive channel (141 aa).

A run of 2 helical transmembrane segments spans residues 16–36 and 86–106; these read VIDLAVGVIIGAAFGKIVDSL and GNFITVAVNFLILAFIVFLMV.

This sequence belongs to the MscL family. Homopentamer.

The protein localises to the cell inner membrane. Its function is as follows. Channel that opens in response to stretch forces in the membrane lipid bilayer. May participate in the regulation of osmotic pressure changes within the cell. This Ralstonia nicotianae (strain ATCC BAA-1114 / GMI1000) (Ralstonia solanacearum) protein is Large-conductance mechanosensitive channel.